An 89-amino-acid polypeptide reads, in one-letter code: MHNTAINVQNRVLSVVRSVLQQNAISADVHPESRLVDIGLSSMGMVELMLKVEAEFDLILPQFEITPENFRSVKAMERMILNQLGSGSG.

The Carrier domain maps to isoleucine 6–leucine 84. At serine 42 the chain carries O-(pantetheine 4'-phosphoryl)serine.

In terms of processing, 4'-phosphopantetheine is transferred from CoA to a specific serine of the apo-form of this carrier protein.

Aminoacyl carrier protein. Can be charged with L-glycine via the formation of a thioester bond between the amino acid and the 4'-phosphopantetheinyl prosthetic group, catalyzed by the bll6282 ligase. This chain is Aminoacyl carrier protein 2, found in Bradyrhizobium diazoefficiens (strain JCM 10833 / BCRC 13528 / IAM 13628 / NBRC 14792 / USDA 110).